Consider the following 447-residue polypeptide: Peptide chain release factor 1, mitochondrial (447 aa).

The N-terminal 63 residues, 1–63, are a transit peptide targeting the mitochondrion; sequence MNRRHLFAWL…LLNKNCSRRY (63 aa). Positions 299-363 are GGQ domain; that stretch reads PKDLRIDTFR…LRARLYQQII (65 aa). Residues 313-315 carry the GGQ motif; sequence GGQ. Position 315 is an N5-methylglutamine (Gln-315).

It belongs to the prokaryotic/mitochondrial release factor family. Post-translationally, methylation of glutamine in the GGQ triplet by HEMK1 is conserved from bacteria to mammals.

It is found in the mitochondrion. Functionally, mitochondrial peptide chain release factor that directs the termination of translation in response to the peptide chain non-canonical stop codons AGG and AGA. Non-canonical termination codons AGG and AGA are found at the end of MT-CO1/COX1 and MT-ND6/ND6 open reading frames, respectively. Recognizes non-canonical stop codons via a network of interactions between the codon, MTRF1 and the ribosomal RNA (rRNA): in contrast to other translation release factors, which identify the codon in the A-site via direct interactions of amino acid side chains with the bases, MTRF1 repositions the first 2 bases of the stop codon to use an intricate network of interactions that includes residues of the release factor, the rRNA of the small ribosomal subunit, as well as neighboring bases of the mRNA. This Bos taurus (Bovine) protein is Peptide chain release factor 1, mitochondrial (MTRF1).